Reading from the N-terminus, the 538-residue chain is Natural resistance-associated macrophage protein 1 (538 aa).

The tract at residues 1–36 (MTGDTDPPKQSRTQYGSISSSPSPGPPQVPPGGTYL) is disordered. Residues 1 to 54 (MTGDTDPPKQSRTQYGSISSSPSPGPPQVPPGGTYLSEKIPIPNAEPGTFSLRK) are Cytoplasmic-facing. The helical transmembrane segment at 55–75 (LWAFTGPGFLMSIAYLDPGNI) threads the bilayer. Over 76 to 81 (QSDLQA) the chain is Extracellular. The chain crosses the membrane as a helical span at residues 82-102 (GAVAGFKLLWVLLWATVLGLL). The Cytoplasmic portion of the chain corresponds to 103–139 (CQRLAARLGVVTGKDLGEICHLYYPKVPRTLLWLNME). A helical transmembrane segment spans residues 140–160 (LAIVGSDMQEVIGTAIAFNLL). The Extracellular portion of the chain corresponds to 161 to 164 (SAGR). Residues 165–185 (IPLWGGVLITVVDTFFFLYLN) form a helical membrane-spanning segment. Residues 186–193 (NYGLRKLE) are Cytoplasmic-facing. The chain crosses the membrane as a helical span at residues 194 to 214 (AFFAFLIAIMAFTFGYEYVVA). Residues 215–240 (RPAQGALLRGLFLPSCSGCGQPELLQ) are Extracellular-facing. A helical transmembrane segment spans residues 241–261 (AVGIVGAIIMPHNIYLHSALV). The Cytoplasmic portion of the chain corresponds to 262 to 286 (KSREVDRTRREDIREANMYFLIEST). A helical transmembrane segment spans residues 287-307 (IALFVSFFINLFVMAVFGQAF). Residues 308 to 346 (YQQTNQAAFNICANSSLHDYAKIFPRNNLTVAVDFYQGG) lie on the Extracellular side of the membrane. Residues N321 and N335 are each glycosylated (N-linked (GlcNAc...) asparagine). The helical transmembrane segment at 347–367 (VILGCLFGPAALYIWAVGLLA) threads the bilayer. Residues 368–394 (AGQSSTMTGTYAGQFVMEGFLKLRWSR) lie on the Cytoplasmic side of the membrane. A helical transmembrane segment spans residues 395-415 (FARLLLTRSCAILPALLVAVF). Topologically, residues 416–432 (KELQDLSSLNDLLNVLQ) are extracellular. The helical transmembrane segment at 433–453 (SLLLPFAVLPILTFTSMPALM) threads the bilayer. Over 454-468 (QEFASGRVNKVITSS) the chain is Cytoplasmic. A helical membrane pass occupies residues 469 to 489 (IMLLVCAINFYFLVSYLPSLP). The Extracellular portion of the chain corresponds to 490-492 (HPA). Residues 493–513 (YFGLVALLAVIYLGLTTYLVW) traverse the membrane as a helical segment. Topologically, residues 514 to 538 (TCLIAHGATLLVHSSHQHFLYGLLE) are cytoplasmic.

This sequence belongs to the NRAMP family.

It is found in the late endosome membrane. The protein resides in the lysosome membrane. It carries out the reaction Zn(2+)(in) + H(+)(out) = Zn(2+)(out) + H(+)(in). It catalyses the reaction Fe(2+)(in) + H(+)(out) = Fe(2+)(out) + H(+)(in). The catalysed reaction is Mn(2+)(in) + H(+)(out) = Mn(2+)(out) + H(+)(in). In terms of biological role, macrophage-specific antiporter that fluxes metal ions in either direction against a proton gradient. Localized to late endosomal lysosomal membranes, delivers bivalent cations from the cytosol into these acidic compartments where they may directly affect antimicrobial activity. Involved in iron metabolism and host natural resistance to infection with intracellular parasites. Pathogen resistance involves sequestration of Fe(2+) and Mn(2+), cofactors of both prokaryotic and eukaryotic catalases and superoxide dismutases, not only to protect the macrophage against its own generation of reactive oxygen species, but to deny the cations to the pathogen for synthesis of its protective enzymes. The polypeptide is Natural resistance-associated macrophage protein 1 (SLC11A1) (Sus scrofa (Pig)).